The following is a 429-amino-acid chain: Phosphoglucosamine mutase (429 aa).

Ser-96 functions as the Phosphoserine intermediate in the catalytic mechanism. Mg(2+) contacts are provided by Ser-96, Asp-230, Asp-232, and Asp-234. Position 96 is a phosphoserine (Ser-96).

Belongs to the phosphohexose mutase family. Mg(2+) serves as cofactor. In terms of processing, activated by phosphorylation.

It catalyses the reaction alpha-D-glucosamine 1-phosphate = D-glucosamine 6-phosphate. Catalyzes the conversion of glucosamine-6-phosphate to glucosamine-1-phosphate. This is Phosphoglucosamine mutase from Thermotoga maritima (strain ATCC 43589 / DSM 3109 / JCM 10099 / NBRC 100826 / MSB8).